Consider the following 182-residue polypeptide: Large ribosomal subunit protein uL6 (182 aa).

The protein belongs to the universal ribosomal protein uL6 family. As to quaternary structure, part of the 50S ribosomal subunit.

This protein binds to the 23S rRNA, and is important in its secondary structure. It is located near the subunit interface in the base of the L7/L12 stalk, and near the tRNA binding site of the peptidyltransferase center. This Methanococcus maripaludis (strain C5 / ATCC BAA-1333) protein is Large ribosomal subunit protein uL6.